The sequence spans 535 residues: Dual specificity calcium/calmodulin-dependent 3',5'-cyclic nucleotide phosphodiesterase 1B (535 aa).

Residues 1–21 (MELSPRSPPEMLESDCPSPLE) form a disordered region. A phosphoserine mark is found at S7 and S14. Calmodulin-binding stretches follow at residues 27–47 (SKKMWIKLRSLLRYMVKQLEN) and 117–140 (EKPKFRSIVHAVQAGIFVERMFRR). Residues 145-502 (VGPTYSTAVH…QKWKERAASG (358 aa)) form the PDEase domain. H222 acts as the Proton donor in catalysis. Residues H226, H262, D263, and D369 each contribute to the Zn(2+) site. D263 serves as a coordination point for Mg(2+). 2 disordered regions span residues 444 to 474 (QPLADDDSKPKSQPSFQWRQPSLDVDVGDPN) and 495 to 535 (WKER…GNLD). The segment covering 454–463 (KSQPSFQWRQ) has biased composition (polar residues). A phosphoserine mark is found at S465 and S513.

This sequence belongs to the cyclic nucleotide phosphodiesterase family. PDE1 subfamily. In terms of assembly, homodimer. The cofactor is Zn(2+). Requires Mg(2+) as cofactor.

The protein resides in the cytoplasm. It localises to the cytosol. The catalysed reaction is a nucleoside 3',5'-cyclic phosphate + H2O = a nucleoside 5'-phosphate + H(+). It carries out the reaction 3',5'-cyclic GMP + H2O = GMP + H(+). The enzyme catalyses 3',5'-cyclic AMP + H2O = AMP + H(+). With respect to regulation, type I PDE are activated by the binding of calmodulin in the presence of Ca(2+). Cyclic nucleotide phosphodiesterase with a dual specificity for the second messengers cAMP and cGMP, which are key regulators of many important physiological processes. Has a preference for cGMP as a substrate. This chain is Dual specificity calcium/calmodulin-dependent 3',5'-cyclic nucleotide phosphodiesterase 1B, found in Mus musculus (Mouse).